A 751-amino-acid chain; its full sequence is CCR4-NOT transcription complex subunit 3 (751 aa).

The interval 240 to 534 (ATSPPSHSHM…QFSTTPEIKA (295 aa)) is disordered. Over residues 257 to 268 (SSSTPTSTTSSS) the composition is skewed to low complexity. A compositionally biased stretch (basic and acidic residues) spans 284–293 (DDKKRGRSTD). Position 292 is a phosphothreonine (threonine 292). The segment covering 294-315 (SEVSQSPAKNGSKPVHSNQHPQ) has biased composition (polar residues). Residue serine 299 is modified to Phosphoserine. Pro residues predominate over residues 317–330 (PAVPPTYPSGPPPT). A compositionally biased stretch (polar residues) spans 339–348 (GNNGASTPAA). Over residues 441 to 450 (SSSGGSSASS) the composition is skewed to low complexity. Positions 463 to 472 (APSTSKESST) are enriched in polar residues. Positions 473-498 (AAPSGAGNVASGSGNNSGGPSLLVPL) are enriched in low complexity. Serine 540 bears the Phosphoserine mark. Residues 659 to 751 (EFYQRLSTET…YRYLEDRDLQ (93 aa)) form a repressor domain region.

This sequence belongs to the CNOT2/3/5 family. Component of the CCR4-NOT complex; distinct complexes seem to exist that differ in the participation of probably mutually exclusive catalytic subunits. In the complex interacts directly with CNOT2. Interacts with TIP120B and NANOS2. Interacts with EBF1. Interacts in an RNA-independent manner with BICC1 (via KH domains).

It localises to the nucleus. The protein resides in the cytoplasm. Its subcellular location is the P-body. In terms of biological role, component of the CCR4-NOT complex which is one of the major cellular mRNA deadenylases and is linked to various cellular processes including bulk mRNA degradation, miRNA-mediated repression, translational repression during translational initiation and general transcription regulation. Additional complex functions may be a consequence of its influence on mRNA expression. May be involved in metabolic regulation; may be involved in recruitment of the CCR4-NOT complex to deadenylation target mRNAs involved in energy metabolism. Involved in mitotic progression and regulation of the spindle assembly checkpoint by regulating the stability of MAD1L1 mRNA. Can repress transcription and may link the CCR4-NOT complex to transcriptional regulation; the repressive function may involve histone deacetylases. Involved in the maintenance of embryonic stem (ES) cell identity; prevents their differentiation towards extraembryonic trophectoderm lineages. The polypeptide is CCR4-NOT transcription complex subunit 3 (Cnot3) (Mus musculus (Mouse)).